Consider the following 452-residue polypeptide: Chromosomal replication initiator protein DnaA (452 aa).

Residues 1–85 are domain I, interacts with DnaA modulators; that stretch reads MSTTAWQKCL…IEVGSKPVEA (85 aa). The interval 85–115 is domain II; the sequence is AVDTPAETIVTSSSTAPLKSAPKKAVDYKSS. Residues 116 to 332 are domain III, AAA+ region; sequence HLNKKFVFDS…GALRRVIANA (217 aa). ATP is bound by residues G160, G162, K163, and T164. Positions 333 to 452 are domain IV, binds dsDNA; that stretch reads HFTGKPITIE…YKNLMRILSS (120 aa).

It belongs to the DnaA family. Oligomerizes as a right-handed, spiral filament on DNA at oriC.

The protein localises to the cytoplasm. Functionally, plays an essential role in the initiation and regulation of chromosomal replication. ATP-DnaA binds to the origin of replication (oriC) to initiate formation of the DNA replication initiation complex once per cell cycle. Binds the DnaA box (a 9 base pair repeat at the origin) and separates the double-stranded (ds)DNA. Forms a right-handed helical filament on oriC DNA; dsDNA binds to the exterior of the filament while single-stranded (ss)DNA is stabiized in the filament's interior. The ATP-DnaA-oriC complex binds and stabilizes one strand of the AT-rich DNA unwinding element (DUE), permitting loading of DNA polymerase. After initiation quickly degrades to an ADP-DnaA complex that is not apt for DNA replication. Binds acidic phospholipids. The polypeptide is Chromosomal replication initiator protein DnaA (Legionella pneumophila (strain Paris)).